We begin with the raw amino-acid sequence, 796 residues long: Vacuolar protein sorting-associated protein 35 (796 aa).

Position 7 is a phosphoserine (Ser7). 2 interaction with SNX3 regions span residues 25-44 (VQSF…DALK) and 205-215 (DREKRERERQE). An interaction with SLC11A2 region spans residues 438-796 (CYVLSNVLDY…EGPIYEGLIL (359 aa)). The interaction with IGF2R cytoplasmic domain stretch occupies residues 500–693 (SEDPDQQYLI…DKNGEELHGG (194 aa)). Ser783 carries the post-translational modification Phosphoserine. A Phosphotyrosine modification is found at Tyr791.

This sequence belongs to the VPS35 family. In terms of assembly, component of the heterotrimeric retromer cargo-selective complex (CSC), also decribed as vacuolar protein sorting subcomplex (VPS), formed by VPS26 (VPS26A or VPS26B), VPS29 and VPS35. The CSC has a highly elongated structure with VPS26 and VPS29 binding independently at opposite distal ends of VPS35 as central platform. The CSC is believed to associate with variable sorting nexins to form functionally distinct retromer complex variants. The originally described retromer complex (also called SNX-BAR retromer) is a pentamer containing the CSC and a heterodimeric membrane-deforming subcomplex formed between SNX1 or SNX2 and SNX5 or SNX6 (also called SNX-BAR subcomplex); the respective CSC and SNX-BAR subcomplexes associate with low affinity. The CSC associates with SNX3 to form a SNX3-retromer complex. The CSC associates with SNX27, the WASH complex and the SNX-BAR subcomplex to form the SNX27-retromer complex. Interacts with VPS26A, VPS26B, VPS29, SNX1, SNX2, IGF2R, SNX3, GOLPH3, LRRK2, SLC11A2, WASHC2A, WASHC2C, FKBP15, WASHC1, RAB7A, SNX27, WASHC5, EHD1. Interacts with MAGEL2; leading to recruitment of the TRIM27:MAGEL2 E3 ubiquitin ligase complex retromer-containing endosomes. Interacts with SORCS2. (Microbial infection) Interacts with human papillomavirus 16 minor capsid protein L2 (via C-terminus); this interaction mediates the transport of the capsid from the early endosome to the Golgi apparatus. As to expression, ubiquitous. Highly expressed in heart, brain, placenta, skeletal muscle, spleen, thymus, testis, ovary, small intestine, kidney and colon.

The protein resides in the cytoplasm. It is found in the membrane. The protein localises to the endosome. It localises to the early endosome. Its subcellular location is the late endosome. In terms of biological role, acts as a component of the retromer cargo-selective complex (CSC). The CSC is believed to be the core functional component of retromer or respective retromer complex variants acting to prevent missorting of selected transmembrane cargo proteins into the lysosomal degradation pathway. The recruitment of the CSC to the endosomal membrane involves RAB7A and SNX3. The CSC seems to associate with the cytoplasmic domain of cargo proteins predominantly via VPS35; however, these interactions seem to be of low affinity and retromer SNX proteins may also contribute to cargo selectivity thus questioning the classical function of the CSC. The SNX-BAR retromer mediates retrograde transport of cargo proteins from endosomes to the trans-Golgi network (TGN) and is involved in endosome-to-plasma membrane transport for cargo protein recycling. The SNX3-retromer mediates the retrograde endosome-to-TGN transport of WLS distinct from the SNX-BAR retromer pathway. The SNX27-retromer is believed to be involved in endosome-to-plasma membrane trafficking and recycling of a broad spectrum of cargo proteins. The CSC seems to act as recruitment hub for other proteins, such as the WASH complex and TBC1D5. Required for retrograde transport of lysosomal enzyme receptor IGF2R and SLC11A2. Required to regulate transcytosis of the polymeric immunoglobulin receptor (pIgR-pIgA). Required for endosomal localization of WASHC2C. Mediates the association of the CSC with the WASH complex via WASHC2. Required for the endosomal localization of TBC1D5. (Microbial infection) The heterotrimeric retromer cargo-selective complex (CSC) mediates the exit of human papillomavirus from the early endosome and the delivery to the Golgi apparatus. This is Vacuolar protein sorting-associated protein 35 from Homo sapiens (Human).